Consider the following 287-residue polypeptide: Elongation factor Ts (287 aa).

The tract at residues 80-83 (TDFL) is involved in Mg(2+) ion dislocation from EF-Tu.

The protein belongs to the EF-Ts family.

The protein localises to the cytoplasm. Its function is as follows. Associates with the EF-Tu.GDP complex and induces the exchange of GDP to GTP. It remains bound to the aminoacyl-tRNA.EF-Tu.GTP complex up to the GTP hydrolysis stage on the ribosome. This chain is Elongation factor Ts, found in Pseudomonas putida (strain GB-1).